A 306-amino-acid chain; its full sequence is Pantothenate kinase (306 aa).

Residue 90–97 (GSVAVGKS) coordinates ATP.

This sequence belongs to the prokaryotic pantothenate kinase family.

Its subcellular location is the cytoplasm. The enzyme catalyses (R)-pantothenate + ATP = (R)-4'-phosphopantothenate + ADP + H(+). It participates in cofactor biosynthesis; coenzyme A biosynthesis; CoA from (R)-pantothenate: step 1/5. The polypeptide is Pantothenate kinase (Listeria monocytogenes serotype 4b (strain CLIP80459)).